A 110-amino-acid polypeptide reads, in one-letter code: Iron-sulfur cluster assembly protein CyaY (110 aa).

The protein belongs to the frataxin family.

Its function is as follows. Involved in iron-sulfur (Fe-S) cluster assembly. May act as a regulator of Fe-S biogenesis. The polypeptide is Iron-sulfur cluster assembly protein CyaY (Pseudomonas syringae pv. syringae (strain B728a)).